A 476-amino-acid polypeptide reads, in one-letter code: Ribulose bisphosphate carboxylase large chain (476 aa).

Positions 1–2 (MS) are excised as a propeptide. P3 is subject to N-acetylproline. K14 is modified (N6,N6,N6-trimethyllysine). 2 residues coordinate substrate: N123 and T173. The active-site Proton acceptor is the K175. K177 contacts substrate. Mg(2+) is bound by residues K201, D203, and E204. K201 carries the post-translational modification N6-carboxylysine. H294 serves as the catalytic Proton acceptor. Residues R295, H327, and S379 each contribute to the substrate site.

It belongs to the RuBisCO large chain family. Type I subfamily. In terms of assembly, heterohexadecamer of 8 large chains and 8 small chains; disulfide-linked. The disulfide link is formed within the large subunit homodimers. Mg(2+) is required as a cofactor. The disulfide bond which can form in the large chain dimeric partners within the hexadecamer appears to be associated with oxidative stress and protein turnover.

The protein resides in the plastid. The protein localises to the chloroplast. It carries out the reaction 2 (2R)-3-phosphoglycerate + 2 H(+) = D-ribulose 1,5-bisphosphate + CO2 + H2O. The catalysed reaction is D-ribulose 1,5-bisphosphate + O2 = 2-phosphoglycolate + (2R)-3-phosphoglycerate + 2 H(+). Its function is as follows. RuBisCO catalyzes two reactions: the carboxylation of D-ribulose 1,5-bisphosphate, the primary event in carbon dioxide fixation, as well as the oxidative fragmentation of the pentose substrate in the photorespiration process. Both reactions occur simultaneously and in competition at the same active site. The polypeptide is Ribulose bisphosphate carboxylase large chain (Setaria italica (Foxtail millet)).